The primary structure comprises 230 residues: Inactive 2-(S)-hydroxypropyl-CoM dehydrogenase 2 (230 aa).

The protein belongs to the short-chain dehydrogenases/reductases (SDR) family.

The protein is Inactive 2-(S)-hydroxypropyl-CoM dehydrogenase 2 of Xanthobacter autotrophicus (strain ATCC BAA-1158 / Py2).